Here is a 338-residue protein sequence, read N- to C-terminus: Cytochrome c biogenesis protein CcsA (338 aa).

8 consecutive transmembrane segments (helical) span residues 15–35 (FLVL…PNIP), 36–56 (GLTG…ATLL), 71–91 (LYES…VAEW), 97–117 (WVGV…ALSL), 142–162 (VMMI…AFLI), 246–266 (IIGL…VWAN), 273–293 (WSWD…AAYL), and 307–327 (AFLA…VNIL).

This sequence belongs to the CcmF/CycK/Ccl1/NrfE/CcsA family. May interact with ccs1.

It is found in the cellular thylakoid membrane. In terms of biological role, required during biogenesis of c-type cytochromes (cytochrome c6 and cytochrome f) at the step of heme attachment. The polypeptide is Cytochrome c biogenesis protein CcsA (Picosynechococcus sp. (strain ATCC 27264 / PCC 7002 / PR-6) (Agmenellum quadruplicatum)).